The primary structure comprises 557 residues: Dihydroxy-acid dehydratase (557 aa).

Asp-78 contributes to the Mg(2+) binding site. Cys-119 serves as a coordination point for [2Fe-2S] cluster. 2 residues coordinate Mg(2+): Asp-120 and Lys-121. Position 121 is an N6-carboxylysine (Lys-121). Cys-192 provides a ligand contact to [2Fe-2S] cluster. Glu-443 serves as a coordination point for Mg(2+). Catalysis depends on Ser-469, which acts as the Proton acceptor.

The protein belongs to the IlvD/Edd family. In terms of assembly, homodimer. Requires [2Fe-2S] cluster as cofactor. The cofactor is Mg(2+).

The catalysed reaction is (2R)-2,3-dihydroxy-3-methylbutanoate = 3-methyl-2-oxobutanoate + H2O. The enzyme catalyses (2R,3R)-2,3-dihydroxy-3-methylpentanoate = (S)-3-methyl-2-oxopentanoate + H2O. Its pathway is amino-acid biosynthesis; L-isoleucine biosynthesis; L-isoleucine from 2-oxobutanoate: step 3/4. It functions in the pathway amino-acid biosynthesis; L-valine biosynthesis; L-valine from pyruvate: step 3/4. In terms of biological role, functions in the biosynthesis of branched-chain amino acids. Catalyzes the dehydration of (2R,3R)-2,3-dihydroxy-3-methylpentanoate (2,3-dihydroxy-3-methylvalerate) into 2-oxo-3-methylpentanoate (2-oxo-3-methylvalerate) and of (2R)-2,3-dihydroxy-3-methylbutanoate (2,3-dihydroxyisovalerate) into 2-oxo-3-methylbutanoate (2-oxoisovalerate), the penultimate precursor to L-isoleucine and L-valine, respectively. In Sulfurihydrogenibium sp. (strain YO3AOP1), this protein is Dihydroxy-acid dehydratase.